A 319-amino-acid chain; its full sequence is MKAKYVFPSDYMADPAANVFDGKLYIYPSHDYDSGECFDDDGGHFQMKDYHVLCIDGDPMEQDAKDCGKQFGIEDIPWVEKQLWDNDCVEKDGKYYLIYSAKDYTGVFHLGVAVADKPEGPFVPEADPIRGSYSIDPCVFKDDDGEIYVYFGGIWGGQLQWYKDNKMLKAEHLPEGKEDPLPSRVARMTGDVKQFAEAPRAVIIVDETGKPLPADDPHRFFEASWMHKYNGKYYFSYSTGDTHLLCYAVGDNPYGPFTYQGVILEPVVGWTTHHSIVEYKGKWYLFHHDCVPSNDTTWLRSLKVAELEYDAEGHIKTVK.

Asp14 acts as the Proton acceptor in catalysis. Glu222 serves as the catalytic Proton donor.

The protein belongs to the glycosyl hydrolase 43 family.

The enzyme catalyses Hydrolysis of (1-&gt;4)-beta-D-xylans, to remove successive D-xylose residues from the non-reducing termini.. In terms of biological role, exoxylanase capable of acting on certain xylans and xylooligosaccharides. In Xylanibacter ruminicola (Prevotella ruminicola), this protein is Beta-xylosidase (xynB).